Reading from the N-terminus, the 94-residue chain is Large ribosomal subunit protein uL23 (94 aa).

This sequence belongs to the universal ribosomal protein uL23 family. As to quaternary structure, part of the 50S ribosomal subunit. Contacts protein L29, and trigger factor when it is bound to the ribosome.

Its function is as follows. One of the early assembly proteins it binds 23S rRNA. One of the proteins that surrounds the polypeptide exit tunnel on the outside of the ribosome. Forms the main docking site for trigger factor binding to the ribosome. This chain is Large ribosomal subunit protein uL23, found in Geobacter sulfurreducens (strain ATCC 51573 / DSM 12127 / PCA).